The chain runs to 222 residues: L-cystine transport system permease protein TcyL (222 aa).

Residues 1–22 (MQESIQLVIDSLPFLLKGAGYT) lie on the Periplasmic side of the membrane. Positions 19–207 (AGYTLQLSIG…IMATVLSTLQ (189 aa)) constitute an ABC transmembrane type-1 domain. The chain crosses the membrane as a helical span at residues 23–43 (LQLSIGGMFFGLLLGFILALM). Over 44–64 (RLSPIWPVRWLARFYISIFRG) the chain is Cytoplasmic. A helical transmembrane segment spans residues 65–85 (TPLIAQLFMIYYGLPQFGIEL). At 86 to 182 (DPIPSAMIGL…RQAQLITSRT (97 aa)) the chain is on the periplasmic side. Residues 183 to 203 (LEVFTMYLAASLIYWIMATVL) form a helical membrane-spanning segment. Topologically, residues 204–222 (STLQNHFENQLNRQEREPK) are cytoplasmic.

It belongs to the binding-protein-dependent transport system permease family. HisMQ subfamily. As to quaternary structure, the complex is composed of two ATP-binding proteins (TcyN), two transmembrane proteins (TcyL) and a solute-binding protein (TcyJ).

It localises to the cell inner membrane. In terms of biological role, part of the ABC transporter complex TcyJLN involved in L-cystine import. Responsible for the translocation of the substrate across the membrane. The protein is L-cystine transport system permease protein TcyL of Escherichia coli O6:H1 (strain CFT073 / ATCC 700928 / UPEC).